The chain runs to 503 residues: Proton-coupled zinc antiporter SLC30A1 (503 aa).

Over 1 to 10 (MGCWGRNRGR) the chain is Cytoplasmic. A helical membrane pass occupies residues 11-31 (LLCMLLLTFMFMVLEVVVSRV). Residues 32 to 35 (TASL) are Extracellular-facing. The chain crosses the membrane as a helical span at residues 36–56 (AMLSDSFHMLSDVLALVVALV). The Zn(2+) site is built by histidine 43 and aspartate 47. At 57 to 78 (AERFARRTHATQKNTFGWIRAE) the chain is on the cytoplasmic side. The helical transmembrane segment at 79–99 (VMGALVNAIFLTGLCFAILLE) threads the bilayer. The Extracellular segment spans residues 100-113 (AVERFIEPHEMQQP). A helical transmembrane segment spans residues 114-134 (LVVLSVGVAGLLVNVLGLCLF). The Cytoplasmic segment spans residues 135–243 (HHHSGEGQGA…RAGQLNMRGV (109 aa)). The disordered stretch occupies residues 140 to 213 (EGQGAGHGHS…PEKLRSDDPV (74 aa)). The segment at 145-156 (GHGHSHGHGHGH) is 6 X 2 AA approximate repeats of H-G. The segment covering 147–165 (GHSHGHGHGHLAKGARKAG) has biased composition (basic residues). Polar residues predominate over residues 184-196 (TNTLVANTSNSNG). A compositionally biased stretch (basic and acidic residues) spans 200-211 (DQAEPEKLRSDD). The helical transmembrane segment at 244-264 (FLHVLGDALGSVIVVVNALVF) threads the bilayer. Histidine 246 and aspartate 250 together coordinate Zn(2+). Over 265-303 (YFNWKGCTEDDFCTNPCFPDPCKSSVEIINSTQAPMRDA) the chain is Extracellular. N-linked (GlcNAc...) asparagine glycosylation occurs at asparagine 294. The helical transmembrane segment at 304-324 (GPCWVLYLDPTLCIIMVCILL) threads the bilayer. The Cytoplasmic portion of the chain corresponds to 325 to 503 (YTTYPLLKES…VPNKQPESSL (179 aa)). A Phosphoserine modification is found at serine 502.

The protein belongs to the cation diffusion facilitator (CDF) transporter (TC 2.A.4) family. SLC30A subfamily. In terms of assembly, homodimer. Interacts with TMEM163. Interacts and forms a complex with TMC6 and TMC8; the interaction regulates zinc transport into the ER. As to expression, widely expressed.

Its subcellular location is the cell membrane. The protein localises to the basolateral cell membrane. It localises to the cytoplasmic vesicle membrane. The protein resides in the cytoplasm. It is found in the endoplasmic reticulum membrane. Its subcellular location is the golgi apparatus membrane. The protein localises to the nucleus membrane. It carries out the reaction Zn(2+)(in) + 2 H(+)(out) = Zn(2+)(out) + 2 H(+)(in). Functionally, zinc ion:proton antiporter that could function at the plasma membrane mediating zinc efflux from cells against its electrochemical gradient protecting them from intracellular zinc accumulation and toxicity. Alternatively, could prevent the transport to the plasma membrane of CACNB2, the L-type calcium channels regulatory subunit, through a yet to be defined mechanism. By modulating the expression of these channels at the plasma membrane, could prevent calcium and zinc influx into cells. By the same mechanism, could also prevent L-type calcium channels-mediated heavy metal influx into cells. In some cells, could also function as a zinc ion:proton antiporter mediating zinc entry into the lumen of cytoplasmic vesicles. In macrophages, can increase zinc ions concentration into the lumen of cytoplasmic vesicles containing engulfed bacteria and could help inactivate them. Forms a complex with TMC6/EVER1 and TMC8/EVER2 at the ER membrane of keratynocytes which facilitates zinc uptake into the ER. Down-regulates the activity of transcription factors induced by zinc and cytokines. This is Proton-coupled zinc antiporter SLC30A1 from Mus musculus (Mouse).